We begin with the raw amino-acid sequence, 619 residues long: Alpha-(1,6)-fucosyltransferase (619 aa).

At 1–17 (MLLVRQLFGASANSWAR) the chain is on the cytoplasmic side. Residues 18–38 (ALIIFVLAWIGLVYVFVVKLT) traverse the membrane as a helical; Signal-anchor for type II membrane protein segment. Residues 39-619 (NTQGQQAAGE…TAKLPLYAGI (581 aa)) lie on the Lumenal side of the membrane. 3 disulfide bridges follow: Cys-253/Cys-315, Cys-261/Cys-279, and Cys-267/Cys-271. A GT23 domain is found at 255 to 539 (NARKLVCKLN…PDAAHRFKSL (285 aa)). Residues 345-351 (PRPPYLP) carry the SH3-binding motif. Residues 411 to 412 (RR) are important for donor substrate binding. Cys-511 and Cys-518 are disulfide-bonded. The SH3 domain occupies 548 to 609 (QNAHNRRVVI…PSFKVEEKVD (62 aa)).

This sequence belongs to the glycosyltransferase 23 family. The cofactor is Mn(2+). Mg(2+) is required as a cofactor.

It localises to the golgi apparatus. The protein localises to the golgi stack membrane. The catalysed reaction is N(4)-{beta-D-GlcNAc-(1-&gt;2)-alpha-D-Man-(1-&gt;3)-[beta-D-GlcNAc-(1-&gt;2)-alpha-D-Man-(1-&gt;6)]-beta-D-Man-(1-&gt;4)-beta-D-GlcNAc-(1-&gt;4)-beta-D-GlcNAc}-L-asparaginyl-[protein] + GDP-beta-L-fucose = an N(4)-{beta-D-GlcNAc-(1-&gt;2)-alpha-D-Man-(1-&gt;3)-[beta-D-GlcNAc-(1-&gt;2)-alpha-D-Man-(1-&gt;6)]-beta-D-Man-(1-&gt;4)-beta-D-GlcNAc-(1-&gt;4)-[alpha-L-Fuc-(1-&gt;6)]-beta-D-GlcNAc}-L-asparaginyl-[protein] + GDP + H(+). It participates in protein modification; protein glycosylation. Its function is as follows. Catalyzes the addition of fucose in alpha 1-6 linkage to the first GlcNAc residue, next to the peptide chains in N-glycans. The addition is prevented if the GlcNAc residue is already fucosylated. This is Alpha-(1,6)-fucosyltransferase (FucT6) from Drosophila melanogaster (Fruit fly).